A 618-amino-acid polypeptide reads, in one-letter code: Alpha-dioxygenase PIOX (618 aa).

The Proton acceptor role is filled by H157. D158 serves as a coordination point for Ca(2+). H162 is a binding site for heme b. Ca(2+) is bound by residues T210, W212, D214, and S216. Residue H311 coordinates hexadecanoate. Positions 382, 479, and 483 each coordinate heme b. E599 is a hexadecanoate binding site.

It belongs to the peroxidase family. Heme b serves as cofactor. Requires Ca(2+) as cofactor.

It catalyses the reaction a 1,2-saturated fatty acid + O2 = a (2R)-2-hydroperoxy fatty acid. The catalysed reaction is (9Z,12Z)-octadecadienoate + O2 = (2R,9Z,12Z)-2-hydroperoxyoctadecadienoate. The enzyme catalyses hexadecanoate + O2 = (2R)-2-hydroperoxyhexadecanoate. It carries out the reaction (9Z,12Z,15Z)-octadecatrienoate + O2 = (R)-2-hydroperoxy-(9Z,12Z,15Z)-octadecatrienoate. It catalyses the reaction tetradecanoate + O2 = (2R)-2-hydroperoxytetradecanoate. The catalysed reaction is octadecanoate + O2 = (2R)-2-hydroperoxyoctadecanoate. The enzyme catalyses (9Z)-octadecenoate + O2 = (2R,9Z)-2-hydroperoxyoctadecenoate. Functionally, alpha-dioxygenase that catalyzes the primary oxygenation step of a variety of 14-20 carbon fatty acids, containing up to three unsaturated bonds, into their corresponding 2R-hydroperoxides. Involved in the production of oxylipins that function in cell signaling, wound healing, and protection from infection. The protein is Alpha-dioxygenase PIOX of Oryza sativa subsp. japonica (Rice).